The sequence spans 437 residues: MSPLSMQTDSVQGTAENKSLETNGTSNDQQLPWKVLGKSLGLPTIEQEQYWLNTAPYFNNLLIQCGYDVHQQYQYLAFYHRHVLPVLGPFIRSSAEANYISGFSAEGYPMELSVNYQASKATVRLGCEPVGEFAGTSQDPMNQFMTREVLGRLSRLDPTFDLRLFDYFDSQFSLTTSEANLAASKLIKQRRQSKVIAFDLKDGAIIPKAYFFLKGKSLASGIPVQDVAFNAIESIAPKQIESPLRVLRTFVTKLFSKPTVTSDVFILAVDCIVPEKSRIKLYVADSQLSLATLREFWTLGGSVTDSATMKGLEIAEELWRILQYDDAVCSHSNMDQLPLVVNYELSSGSATPKPQLYLPLHGRNDEAMANALTKFWDYLGWKGLAAQYKKDLYANNPCRNLAETTTVQRWVAFSYTESGGAYLTVYFHAVGGMKGNL.

Residues 1-28 are disordered; it reads MSPLSMQTDSVQGTAENKSLETNGTSND. Residues 102-103 and glutamate 111 contribute to the L-tryptophan site; that span reads GF. Dimethylallyl diphosphate-binding residues include arginine 124, lysine 208, tyrosine 210, tyrosine 282, glutamine 355, tyrosine 357, tyrosine 422, and tyrosine 426.

Belongs to the tryptophan dimethylallyltransferase family.

It carries out the reaction (R)-benzodiazepinedione + dimethylallyl diphosphate = (2R,3S,11R)-aszonalenin + diphosphate. The catalysed reaction is (S)-benzodiazepinedione + dimethylallyl diphosphate = (2R,3S,11S)-aszonalenin + diphosphate. Its pathway is alkaloid biosynthesis. Its function is as follows. Indole diterpene prenyltransferase; part of the gene cluster that mediates the biosynthesis of the prenylated pyrroloindoline diketopiperazine acetylaszonalenin. The first step in the pathway is the formation of (R)-benzodiazepinedione by condensation of tryptophan and anthranilic acid catalyzed by the non-ribosomal peptide synthetase anaPS. The prenyltransferase anaPT then converts (R)-benzodiazepinedione to aszonalenin in the presence of dimethylallyl diphosphate (DMAPP) via C3-prenylation. The last step in the biosynthesis of acetylaszonalenin via acetylation of aszonalenin at position N1 catalyzed by anaAT. The sequence is that of Indole diterpene prenyltransferase anaPT from Neosartorya fischeri (strain ATCC 1020 / DSM 3700 / CBS 544.65 / FGSC A1164 / JCM 1740 / NRRL 181 / WB 181) (Aspergillus fischerianus).